A 467-amino-acid chain; its full sequence is Nodulation protein T (467 aa).

Positions 1–17 (MRFTRYTTPFFSLLLSG) are cleaved as a signal peptide. Cysteine 18 carries N-palmitoyl cysteine lipidation. Cysteine 18 is lipidated: S-diacylglycerol cysteine.

The protein belongs to the outer membrane factor (OMF) (TC 1.B.17) family.

It is found in the cell membrane. This chain is Nodulation protein T (nodT), found in Rhizobium leguminosarum bv. trifolii.